We begin with the raw amino-acid sequence, 188 residues long: Pyridoxal 5'-phosphate synthase subunit PdxT (188 aa).

Position 47–49 (47–49) interacts with L-glutamine; the sequence is GES. Residue Cys-79 is the Nucleophile of the active site. Residues Arg-105 and 134–135 each bind L-glutamine; that span reads IR. Active-site charge relay system residues include His-170 and Glu-172.

This sequence belongs to the glutaminase PdxT/SNO family. In terms of assembly, in the presence of PdxS, forms a dodecamer of heterodimers. Only shows activity in the heterodimer.

The catalysed reaction is aldehydo-D-ribose 5-phosphate + D-glyceraldehyde 3-phosphate + L-glutamine = pyridoxal 5'-phosphate + L-glutamate + phosphate + 3 H2O + H(+). It carries out the reaction L-glutamine + H2O = L-glutamate + NH4(+). Its pathway is cofactor biosynthesis; pyridoxal 5'-phosphate biosynthesis. Its function is as follows. Catalyzes the hydrolysis of glutamine to glutamate and ammonia as part of the biosynthesis of pyridoxal 5'-phosphate. The resulting ammonia molecule is channeled to the active site of PdxS. The sequence is that of Pyridoxal 5'-phosphate synthase subunit PdxT from Listeria monocytogenes serotype 4b (strain CLIP80459).